The following is a 270-amino-acid chain: Pyrroline-5-carboxylate reductase (270 aa).

The protein belongs to the pyrroline-5-carboxylate reductase family.

The protein localises to the cytoplasm. The catalysed reaction is L-proline + NADP(+) = (S)-1-pyrroline-5-carboxylate + NADPH + 2 H(+). It carries out the reaction L-proline + NAD(+) = (S)-1-pyrroline-5-carboxylate + NADH + 2 H(+). The protein operates within amino-acid biosynthesis; L-proline biosynthesis; L-proline from L-glutamate 5-semialdehyde: step 1/1. In terms of biological role, catalyzes the reduction of 1-pyrroline-5-carboxylate (PCA) to L-proline. This Corynebacterium melassecola protein is Pyrroline-5-carboxylate reductase.